A 360-amino-acid chain; its full sequence is Lipid-A-disaccharide synthase (360 aa).

This sequence belongs to the LpxB family.

The enzyme catalyses a lipid X + a UDP-2-N,3-O-bis[(3R)-3-hydroxyacyl]-alpha-D-glucosamine = a lipid A disaccharide + UDP + H(+). It functions in the pathway bacterial outer membrane biogenesis; LPS lipid A biosynthesis. Functionally, condensation of UDP-2,3-diacylglucosamine and 2,3-diacylglucosamine-1-phosphate to form lipid A disaccharide, a precursor of lipid A, a phosphorylated glycolipid that anchors the lipopolysaccharide to the outer membrane of the cell. In Helicobacter pylori (strain Shi470), this protein is Lipid-A-disaccharide synthase.